The primary structure comprises 129 residues: MDKNIKEIIKNMDLKFRNIDGKKLLLAISTDKQKNVLMTAFMSEESLEKSIETGYMHYYSTSRDKIWKKGEESKNVQKIIDVYRDCDGDALLFTVEQTGWACHEGYMSCFHNKIDLNTGDSTVIGTKLD.

Asp-85 provides a ligand contact to Mg(2+). Cys-86 contacts Zn(2+). Residues Asp-87 and Asp-89 each coordinate Mg(2+). Cys-102 and Cys-109 together coordinate Zn(2+).

It belongs to the PRA-CH family. In terms of assembly, homodimer. Mg(2+) serves as cofactor. Requires Zn(2+) as cofactor.

It is found in the cytoplasm. It catalyses the reaction 1-(5-phospho-beta-D-ribosyl)-5'-AMP + H2O = 1-(5-phospho-beta-D-ribosyl)-5-[(5-phospho-beta-D-ribosylamino)methylideneamino]imidazole-4-carboxamide. The protein operates within amino-acid biosynthesis; L-histidine biosynthesis; L-histidine from 5-phospho-alpha-D-ribose 1-diphosphate: step 3/9. Catalyzes the hydrolysis of the adenine ring of phosphoribosyl-AMP. The protein is Phosphoribosyl-AMP cyclohydrolase (hisI) of Methanococcus maripaludis (strain DSM 14266 / JCM 13030 / NBRC 101832 / S2 / LL).